The chain runs to 411 residues: Citrate synthase (411 aa).

Residues His304 and Asp363 contribute to the active site.

This sequence belongs to the citrate synthase family.

It carries out the reaction oxaloacetate + acetyl-CoA + H2O = citrate + CoA + H(+). It functions in the pathway carbohydrate metabolism; tricarboxylic acid cycle; isocitrate from oxaloacetate: step 1/2. The sequence is that of Citrate synthase (gltA) from Rickettsia massiliae.